Reading from the N-terminus, the 93-residue chain is Large ribosomal subunit protein uL23cz/uL23cy (93 aa).

Belongs to the universal ribosomal protein uL23 family. Part of the 50S ribosomal subunit.

It is found in the plastid. The protein resides in the chloroplast. Functionally, binds to 23S rRNA. This is Large ribosomal subunit protein uL23cz/uL23cy (rpl23-A) from Glycine max (Soybean).